A 668-amino-acid polypeptide reads, in one-letter code: Transketolase 1 (668 aa).

His26 lines the substrate pocket. Thiamine diphosphate-binding positions include His66 and 114 to 116 (GPL). Mg(2+) is bound at residue Asp155. Residues Gly156 and Asn185 each contribute to the thiamine diphosphate site. Mg(2+) contacts are provided by Asn185 and Ile187. Substrate contacts are provided by His261, Arg358, and Ser385. Residue His261 coordinates thiamine diphosphate. The Proton donor role is filled by Glu413. Residue Phe439 coordinates thiamine diphosphate. Substrate contacts are provided by His463, Asp471, and Arg522.

It belongs to the transketolase family. In terms of assembly, homodimer. Mg(2+) is required as a cofactor. It depends on Ca(2+) as a cofactor. Requires Mn(2+) as cofactor. Co(2+) serves as cofactor. The cofactor is thiamine diphosphate.

The catalysed reaction is D-sedoheptulose 7-phosphate + D-glyceraldehyde 3-phosphate = aldehydo-D-ribose 5-phosphate + D-xylulose 5-phosphate. Functionally, catalyzes the transfer of a two-carbon ketol group from a ketose donor to an aldose acceptor, via a covalent intermediate with the cofactor thiamine pyrophosphate. The polypeptide is Transketolase 1 (tktA) (Pasteurella multocida (strain Pm70)).